We begin with the raw amino-acid sequence, 102 residues long: NADH-quinone oxidoreductase subunit K (102 aa).

Helical transmembrane passes span 5-25, 31-51, and 66-86; these read ITHYLTVSALMFTIGIAGIFL, IIILMSIELILLSVNLNFVAF, and FVLTVAAAEAAIGLAILVVFF.

This sequence belongs to the complex I subunit 4L family. As to quaternary structure, NDH-1 is composed of 14 different subunits. Subunits NuoA, H, J, K, L, M, N constitute the membrane sector of the complex.

The protein resides in the cell inner membrane. The catalysed reaction is a quinone + NADH + 5 H(+)(in) = a quinol + NAD(+) + 4 H(+)(out). NDH-1 shuttles electrons from NADH, via FMN and iron-sulfur (Fe-S) centers, to quinones in the respiratory chain. The immediate electron acceptor for the enzyme in this species is believed to be ubiquinone. Couples the redox reaction to proton translocation (for every two electrons transferred, four hydrogen ions are translocated across the cytoplasmic membrane), and thus conserves the redox energy in a proton gradient. This is NADH-quinone oxidoreductase subunit K from Bartonella grahamii (strain as4aup).